We begin with the raw amino-acid sequence, 519 residues long: Cytochrome P450 52-E3 (519 aa).

Residues 10 to 30 traverse the membrane as a helical segment; that stretch reads VLGGISVSFLLAYQAIYFYFI. Cys-461 serves as a coordination point for heme.

The protein belongs to the cytochrome P450 family. Requires heme as cofactor.

Its subcellular location is the membrane. It carries out the reaction an omega-methyl-long-chain fatty acid + reduced [NADPH--hemoprotein reductase] + O2 = an omega-hydroxy-long-chain fatty acid + oxidized [NADPH--hemoprotein reductase] + H2O + H(+). The enzyme catalyses (9Z)-octadecenoate + reduced [NADPH--hemoprotein reductase] + O2 = 18-hydroxy-(9Z)-octadecenoate + oxidized [NADPH--hemoprotein reductase] + H2O + H(+). The catalysed reaction is hexadecanoate + reduced [NADPH--hemoprotein reductase] + O2 = 16-hydroxyhexadecanoate + oxidized [NADPH--hemoprotein reductase] + H2O + H(+). It catalyses the reaction (9Z)-hexadecenoate + reduced [NADPH--hemoprotein reductase] + O2 = (9Z)-16-hydroxyhexadec-9-enoate + oxidized [NADPH--hemoprotein reductase] + H2O + H(+). Catalyzes the terminal (at the omega-position) hydroxylation of a fatty acid. Probably involved in alkane metabolism. Has minor activity toward myristic acid, palmitic acid, palmitoleic acid and oleic acid. This chain is Cytochrome P450 52-E3, found in Starmerella bombicola (Yeast).